The chain runs to 150 residues: D-aminoacyl-tRNA deacylase (150 aa).

Positions 138–139 (GP) match the Gly-cisPro motif, important for rejection of L-amino acids motif.

It belongs to the DTD family. In terms of assembly, homodimer.

Its subcellular location is the cytoplasm. The catalysed reaction is glycyl-tRNA(Ala) + H2O = tRNA(Ala) + glycine + H(+). It carries out the reaction a D-aminoacyl-tRNA + H2O = a tRNA + a D-alpha-amino acid + H(+). In terms of biological role, an aminoacyl-tRNA editing enzyme that deacylates mischarged D-aminoacyl-tRNAs. Also deacylates mischarged glycyl-tRNA(Ala), protecting cells against glycine mischarging by AlaRS. Acts via tRNA-based rather than protein-based catalysis; rejects L-amino acids rather than detecting D-amino acids in the active site. By recycling D-aminoacyl-tRNA to D-amino acids and free tRNA molecules, this enzyme counteracts the toxicity associated with the formation of D-aminoacyl-tRNA entities in vivo and helps enforce protein L-homochirality. The polypeptide is D-aminoacyl-tRNA deacylase (Dechloromonas aromatica (strain RCB)).